The following is a 69-amino-acid chain: Large ribosomal subunit protein uL29 (69 aa).

The protein belongs to the universal ribosomal protein uL29 family.

In Natronomonas pharaonis (strain ATCC 35678 / DSM 2160 / CIP 103997 / JCM 8858 / NBRC 14720 / NCIMB 2260 / Gabara) (Halobacterium pharaonis), this protein is Large ribosomal subunit protein uL29.